The primary structure comprises 171 residues: Co-chaperone protein HscB homolog (171 aa).

One can recognise a J domain in the interval 2–74 (NHFELFGLPL…ISRAEYLLVQ (73 aa)).

This sequence belongs to the HscB family. In terms of assembly, interacts with HscA and stimulates its ATPase activity.

In terms of biological role, co-chaperone involved in the maturation of iron-sulfur cluster-containing proteins. Seems to help targeting proteins to be folded toward HscA. This Vibrio atlanticus (strain LGP32) (Vibrio splendidus (strain Mel32)) protein is Co-chaperone protein HscB homolog.